A 104-amino-acid polypeptide reads, in one-letter code: Large ribosomal subunit protein bL21 (104 aa).

It belongs to the bacterial ribosomal protein bL21 family. As to quaternary structure, part of the 50S ribosomal subunit. Contacts protein L20.

In terms of biological role, this protein binds to 23S rRNA in the presence of protein L20. The sequence is that of Large ribosomal subunit protein bL21 from Opitutus terrae (strain DSM 11246 / JCM 15787 / PB90-1).